The primary structure comprises 161 residues: MAWDLKVKMLGGNDFLVSVTNSMTVSELKKQIAQKIGVPAFQQRLAHQTAVLQDGLTLSSLGLGPSSTVMLVVQNCSEPLSILVRNERGHSNIYEVFLTQTVDTLKKKVSQREQVHEDQFWLSFEGRPMEDKELLGEYGLKPQCTVIKHLRLRGGGGDQCA.

Ubiquitin-like domains lie at 2–76 and 77–155; these read AWDL…VQNC and SEPL…LRGG. Cys-76 and Cys-144 each carry S-nitrosocysteine. Residues 150–155 carry the LRLRGG motif; that stretch reads LRLRGG. Residues 151-155 are involved in the ligation of specific target proteins; the sequence is RLRGG. A Glycyl lysine isopeptide (Gly-Lys) (interchain with K-? in acceptor proteins) cross-link involves residue Gly-155. Positions 156-161 are cleaved as a propeptide — removed in mature form; sequence GGDQCA.

Homodimer; disulfide-linked. Interacts with, and is conjugated to its targets by the UBE1L (E1 enzyme) and UBE2E2 (E2 enzyme). Interacts with NEDD4. Interacts with PARP12; this interaction inhibits PINK1/Parkin-dependent mitophagy. In terms of processing, S-nitrosylation decreases its dimerization, thereby increasing the availability as well as the solubility of monomeric ISG15 for its conjugation to cellular proteins. Induced as an inactive, precursor protein that is cleaved by specific proteases to expose the C-terminal diglycine (LRLRGG) motif. This motif is essential not only for its conjugation to substrates but also for its recognition by the relevant processing proteases.

The protein resides in the cytoplasm. The protein localises to the secreted. Its function is as follows. Ubiquitin-like protein which plays a key role in the innate immune response to viral infection either via its conjugation to a target protein (ISGylation) or via its action as a free or unconjugated protein. ISGylation involves a cascade of enzymatic reactions involving E1, E2, and E3 enzymes which catalyze the conjugation of ISG15 to a lysine residue in the target protein. Its target proteins include SERPINA3G/SPI2A, JAK1, MAPK3/ERK1, PLCG1, TRIM25, STAT5A, MAPK1/ERK2 and globin. Isgylation of the viral sensor IFIH1/MDA5 promotes IFIH1/MDA5 oligomerization and triggers activation of innate immunity against a range of viruses, including coronaviruses, flaviviruses and picornaviruses. Can also isgylate: RIGI which inhibits its function in antiviral signaling response, IRF3 which inhibits its ubiquitination and degradation as well as EIF4E2 which enhances its cap structure-binding activity and translation-inhibition activity. Exhibits antiviral activity towards both DNA and RNA viruses, including influenza A and B virus, sindbis virus (SV) and herpes simplex type-1 (HHV-1). Plays a significant role in the control of neonatal Chikungunya virus (CHIKV) infection by acting as a putative immunomodulator of pro-inflammatory cytokines. Protects mice against the consequences of Chikungunya virus infection by down-regulating the pathogenic cytokine response, often denoted as the cytokine storm. Plays a role in erythroid differentiation. The secreted form of ISG15 can: induce natural killer cell proliferation, act as a chemotactic factor for neutrophils and act as a IFN-gamma-inducing cytokine playing an essential role in antimycobacterial immunity. The secreted form acts through the integrin ITGAL/ITGB2 receptor to initiate activation of SRC family tyrosine kinases including LYN, HCK and FGR which leads to secretion of IFNG and IL10; the interaction is mediated by ITGAL. The polypeptide is Ubiquitin-like protein ISG15 (Isg15) (Mus musculus (Mouse)).